A 759-amino-acid polypeptide reads, in one-letter code: Spindle pole body component alp16 (759 aa).

In terms of assembly, interacts with gamma-tubulin.

It is found in the cytoplasm. The protein localises to the cytoskeleton. The protein resides in the microtubule organizing center. Its subcellular location is the spindle pole body. In terms of biological role, component of the gamma tubule complex that is required for the regulation of both interphase microtubules and mitotic bipolar spindles. The chain is Spindle pole body component alp16 (alp16) from Schizosaccharomyces pombe (strain 972 / ATCC 24843) (Fission yeast).